The following is a 124-amino-acid chain: Small ribosomal subunit protein uS12 (124 aa).

D89 is modified (3-methylthioaspartic acid). The interval 102 to 124 (LDTSGVNNRKHGRSKYGTKRPKS) is disordered. A compositionally biased stretch (basic residues) spans 109–124 (NRKHGRSKYGTKRPKS).

It belongs to the universal ribosomal protein uS12 family. In terms of assembly, part of the 30S ribosomal subunit. Contacts proteins S8 and S17. May interact with IF1 in the 30S initiation complex.

Its function is as follows. With S4 and S5 plays an important role in translational accuracy. Functionally, interacts with and stabilizes bases of the 16S rRNA that are involved in tRNA selection in the A site and with the mRNA backbone. Located at the interface of the 30S and 50S subunits, it traverses the body of the 30S subunit contacting proteins on the other side and probably holding the rRNA structure together. The combined cluster of proteins S8, S12 and S17 appears to hold together the shoulder and platform of the 30S subunit. This Francisella philomiragia subsp. philomiragia (strain ATCC 25017 / CCUG 19701 / FSC 153 / O#319-036) protein is Small ribosomal subunit protein uS12.